The sequence spans 408 residues: MASAAVASMVLDPKASPALMDLSTADEEDLYGRLKSLERQLEFTDIQEEYVKDEQKNLKRELLRAQEEVKRIQSVPLVIGQFMEMVDQNNGIVGSTTGSNYYVRILSTINRELLKPSASVALHRHSNALVDVLPPEADSSISLLSQSEKPDVSYNDIGGCDIQKQEIREAVELPLTHHELYKQIGIDPPRGVLLYGPPGTGKTMLAKAVANHTTAAFIRVVGSEFVQKYLGEGPRMVRDVFRLAKENAPAIIFIDEVDAIATARFDAQTGADREVQRILMELLNQMDGFDQTVNVKVIMATNRADTLDPALLRPGRLDRKIEFPLPDRRQKRLVFQVCTSKMNLSDEVDLEDYVSRPDKISAAEIAAICQEAGMHAVRKNRYVILPKDFEKGYRANVKKPDTDFEFYK.

An N-acetylalanine modification is found at alanine 2. A Phosphoserine modification is found at serine 16. A coiled-coil region spans residues 28–75 (EDLYGRLKSLERQLEFTDIQEEYVKDEQKNLKRELLRAQEEVKRIQSV). 196-203 (GPPGTGKT) lines the ATP pocket.

It belongs to the AAA ATPase family. In terms of assembly, component of the 19S regulatory particle (RP/PA700) base subcomplex of the 26S proteasome. The 26S proteasome is composed of a core protease (CP), known as the 20S proteasome, capped at one or both ends by the 19S regulatory particle (RP/PA700). The RP/PA700 complex is composed of at least 17 different subunits in two subcomplexes, the base and the lid, which form the portions proximal and distal to the 20S proteolytic core, respectively. As to expression, expressed in dark-grown etiolated seedlings, roots, leaves, stems and flowers.

It is found in the cytoplasm. The protein localises to the nucleus. Functionally, the 26S proteasome is involved in the ATP-dependent degradation of ubiquitinated proteins. The regulatory (or ATPase) complex confers ATP dependency and substrate specificity to the 26S complex. The polypeptide is 26S proteasome regulatory subunit 6B homolog (RPT3) (Arabidopsis thaliana (Mouse-ear cress)).